Here is a 130-residue protein sequence, read N- to C-terminus: Ribosome-binding factor A (130 aa).

This sequence belongs to the RbfA family. As to quaternary structure, monomer. Binds 30S ribosomal subunits, but not 50S ribosomal subunits or 70S ribosomes.

The protein resides in the cytoplasm. In terms of biological role, one of several proteins that assist in the late maturation steps of the functional core of the 30S ribosomal subunit. Associates with free 30S ribosomal subunits (but not with 30S subunits that are part of 70S ribosomes or polysomes). Required for efficient processing of 16S rRNA. May interact with the 5'-terminal helix region of 16S rRNA. The chain is Ribosome-binding factor A from Prochlorococcus marinus (strain MIT 9215).